A 139-amino-acid chain; its full sequence is Putative nickel-responsive regulator (139 aa).

Positions 79, 90, 92, and 98 each coordinate Ni(2+).

This sequence belongs to the transcriptional regulatory CopG/NikR family. Requires Ni(2+) as cofactor.

Functionally, transcriptional regulator. This chain is Putative nickel-responsive regulator, found in Trichlorobacter lovleyi (strain ATCC BAA-1151 / DSM 17278 / SZ) (Geobacter lovleyi).